The following is a 67-amino-acid chain: Large ribosomal subunit protein bL35 (67 aa).

A disordered region spans residues 1–20; it reads MPKLKTKSGAKKRFVPKKSG.

This sequence belongs to the bacterial ribosomal protein bL35 family.

The chain is Large ribosomal subunit protein bL35 from Anaeromyxobacter dehalogenans (strain 2CP-C).